We begin with the raw amino-acid sequence, 345 residues long: Phosphoribosylformylglycinamidine cyclo-ligase (345 aa).

It belongs to the AIR synthase family.

It is found in the cytoplasm. It catalyses the reaction 2-formamido-N(1)-(5-O-phospho-beta-D-ribosyl)acetamidine + ATP = 5-amino-1-(5-phospho-beta-D-ribosyl)imidazole + ADP + phosphate + H(+). It participates in purine metabolism; IMP biosynthesis via de novo pathway; 5-amino-1-(5-phospho-D-ribosyl)imidazole from N(2)-formyl-N(1)-(5-phospho-D-ribosyl)glycinamide: step 2/2. In Prochlorococcus marinus (strain MIT 9313), this protein is Phosphoribosylformylglycinamidine cyclo-ligase.